Here is a 276-residue protein sequence, read N- to C-terminus: Shikimate dehydrogenase (NADP(+)) (276 aa).

Shikimate contacts are provided by residues 18–20 (SKS) and Thr-65. Lys-69 serves as the catalytic Proton acceptor. Glu-81 serves as a coordination point for NADP(+). Residues Asn-90 and Asp-106 each coordinate shikimate. NADP(+) is bound by residues 130-134 (GAGGA), 154-159 (NRTSSK), and Met-217. Position 219 (Tyr-219) interacts with shikimate. Gly-241 contacts NADP(+).

Belongs to the shikimate dehydrogenase family. Homodimer.

It catalyses the reaction shikimate + NADP(+) = 3-dehydroshikimate + NADPH + H(+). Its pathway is metabolic intermediate biosynthesis; chorismate biosynthesis; chorismate from D-erythrose 4-phosphate and phosphoenolpyruvate: step 4/7. Functionally, involved in the biosynthesis of the chorismate, which leads to the biosynthesis of aromatic amino acids. Catalyzes the reversible NADPH linked reduction of 3-dehydroshikimate (DHSA) to yield shikimate (SA). This Vibrio atlanticus (strain LGP32) (Vibrio splendidus (strain Mel32)) protein is Shikimate dehydrogenase (NADP(+)).